The primary structure comprises 360 residues: Secreted LysM effector LysM2 (360 aa).

A signal peptide spans methionine 1–glycine 21. A LysM 1 domain is found at threonine 37 to valine 85. Residues alanine 94–alanine 113 show a composition bias toward low complexity. The segment at alanine 94–glycine 125 is disordered. A glycan (N-linked (GlcNAc...) asparagine) is linked at asparagine 129. Residues lysine 132–valine 179 form the LysM 2 domain. N-linked (GlcNAc...) asparagine glycosylation occurs at asparagine 204. LysM domains follow at residues arginine 225 to isoleucine 272 and lysine 311 to valine 357.

The protein belongs to the secreted LysM effector family.

It localises to the secreted. It is found in the cell wall. Its function is as follows. Secreted effector that binds two substrates, chitin and N-linked oligosaccharides associated with human skin glycoproteins. Could provide the pathogen with three important functions including shielding host cell wall chitin from the human immune system, shielding the pathogen's glycoproteins from host degradation and immune surveillance, and helping facilitate pathogen adhesion to human skin. The protein is Secreted LysM effector LysM2 of Trichophyton rubrum (strain ATCC MYA-4607 / CBS 118892) (Athlete's foot fungus).